We begin with the raw amino-acid sequence, 276 residues long: Diaminopimelate epimerase (276 aa).

Substrate is bound by residues N13, Q46, and N66. C75 acts as the Proton donor in catalysis. Substrate is bound by residues 76–77, N159, N192, and 210–211; these read GN and ER. C219 serves as the catalytic Proton acceptor. Residue 220–221 coordinates substrate; sequence GS.

This sequence belongs to the diaminopimelate epimerase family. Homodimer.

It is found in the cytoplasm. It carries out the reaction (2S,6S)-2,6-diaminopimelate = meso-2,6-diaminopimelate. The protein operates within amino-acid biosynthesis; L-lysine biosynthesis via DAP pathway; DL-2,6-diaminopimelate from LL-2,6-diaminopimelate: step 1/1. Its function is as follows. Catalyzes the stereoinversion of LL-2,6-diaminopimelate (L,L-DAP) to meso-diaminopimelate (meso-DAP), a precursor of L-lysine and an essential component of the bacterial peptidoglycan. The protein is Diaminopimelate epimerase of Coxiella burnetii (strain CbuK_Q154) (Coxiella burnetii (strain Q154)).